A 424-amino-acid polypeptide reads, in one-letter code: Elongation factor 1-alpha (424 aa).

Positions 5-223 constitute a tr-type G domain; sequence KPHLNLITIG…DAFKVPEKPI (219 aa). Positions 14–21 are G1; the sequence is GHVDHGKS. Residue 14-21 participates in GTP binding; the sequence is GHVDHGKS. A Mg(2+)-binding site is contributed by S21. The G2 stretch occupies residues 70 to 74; the sequence is GVTID. A G3 region spans residues 91–94; it reads DAPG. GTP contacts are provided by residues 91 to 95 and 148 to 151; these read DAPGH and NKMD. The interval 148–151 is G4; that stretch reads NKMD. The segment at 187 to 189 is G5; that stretch reads SGY.

Belongs to the TRAFAC class translation factor GTPase superfamily. Classic translation factor GTPase family. EF-Tu/EF-1A subfamily.

The protein localises to the cytoplasm. The enzyme catalyses GTP + H2O = GDP + phosphate + H(+). Functionally, GTP hydrolase that promotes the GTP-dependent binding of aminoacyl-tRNA to the A-site of ribosomes during protein biosynthesis. This Thermoplasma acidophilum (strain ATCC 25905 / DSM 1728 / JCM 9062 / NBRC 15155 / AMRC-C165) protein is Elongation factor 1-alpha.